A 543-amino-acid polypeptide reads, in one-letter code: Autophagy-related protein 18 (543 aa).

The disordered stretch occupies residues A163–N200. Residues R173–N183 are compositionally biased toward polar residues. WD repeat units lie at residues A225–Q265 and T270–T309. The L/FRRG motif motif lies at F266–T270. Over residues K326–K336 the composition is skewed to polar residues. Positions K326–H408 are disordered. Residues S343–A372 are compositionally biased toward acidic residues. The segment covering N377–S400 has biased composition (polar residues).

The protein belongs to the WD repeat PROPPIN family. In terms of assembly, component of the PI(3,5)P2 regulatory complex.

The protein resides in the preautophagosomal structure membrane. Its subcellular location is the vacuole membrane. It localises to the endosome membrane. In terms of biological role, the PI(3,5)P2 regulatory complex regulates both the synthesis and turnover of phosphatidylinositol 3,5-bisphosphate (PtdIns(3,5)P2). Necessary for proper vacuole morphology. Plays an important role in osmotically-induced vacuole fragmentation. Involved in correct ATG9 trafficking to the pre-autophagosomal structure. Might also be involved in premeiotic DNA replication. Required for cytoplasm to vacuole transport (Cvt) vesicle formation, autophagy, glucose-induced micropexophagy and ethanol-induced macropexophagy. Required for the involution of the vacuole that occurs during micropexophagy. Involved in the recruitment of ATG2 to punctate structures when cells are grown on glucose. The sequence is that of Autophagy-related protein 18 (ATG18) from Komagataella pastoris (Yeast).